The primary structure comprises 331 residues: Olfactory receptor 7E178 (331 aa).

The Extracellular portion of the chain corresponds to 1-47 (MMDRYSFIMHQHRDDTVWCPSKIEEQNITRISEFHLMGLSDDLQLQP). Asn27 is a glycosylation site (N-linked (GlcNAc...) asparagine). A helical transmembrane segment spans residues 48 to 68 (ILFGLFLSMYLVTLLGNLLII). Topologically, residues 69–80 (LTVSSDSHLHSP) are cytoplasmic. Residues 81 to 100 (MYFFLSNLSLADVSFTSTTL) form a helical membrane-spanning segment. Residues 101–119 (PKMIVDIQTHNRAISYSGC) lie on the Extracellular side of the membrane. An intrachain disulfide couples Cys119 to Cys201. A helical transmembrane segment spans residues 120 to 140 (LTQMSFFMLFGCLDSLLLTAM). The Cytoplasmic portion of the chain corresponds to 141-164 (AYDRFVAICHPLHYQFIMNPRLCG). Residues 165–185 (LLVFLSVLISLFVSQLHNSVV) traverse the membrane as a helical segment. At 186-218 (LQLTYFKSVDISHFFCDPSQLLNLACSDTFTNN) the chain is on the extracellular side. A helical membrane pass occupies residues 219–239 (IVMYFVGAISGFLPISGIFFS). The Cytoplasmic segment spans residues 240–266 (YYKIVSSILRMPSPGGKYKAFSTCGSH). Residues 267 to 287 (LSVVCLFYGTGLGVYLSSAVS) form a helical membrane-spanning segment. The Extracellular portion of the chain corresponds to 288 to 293 (LSPRKG). The helical transmembrane segment at 294-314 (AVASIVYTVVTPMLNPFIYSL) threads the bilayer. Over 315–331 (RNQDIKRAMWRLLRKTV) the chain is Cytoplasmic.

This sequence belongs to the G-protein coupled receptor 1 family.

The protein resides in the cell membrane. Its function is as follows. Odorant receptor. This is Olfactory receptor 7E178 from Mus musculus (Mouse).